The sequence spans 341 residues: Ribosomal RNA small subunit methyltransferase H (341 aa).

S-adenosyl-L-methionine contacts are provided by residues 47–49 (GGY), Asp-64, Phe-91, Asp-109, and Gln-116.

Belongs to the methyltransferase superfamily. RsmH family.

The protein localises to the cytoplasm. It catalyses the reaction cytidine(1402) in 16S rRNA + S-adenosyl-L-methionine = N(4)-methylcytidine(1402) in 16S rRNA + S-adenosyl-L-homocysteine + H(+). In terms of biological role, specifically methylates the N4 position of cytidine in position 1402 (C1402) of 16S rRNA. The chain is Ribosomal RNA small subunit methyltransferase H from Sinorhizobium medicae (strain WSM419) (Ensifer medicae).